The following is a 211-amino-acid chain: N-(5'-phosphoribosyl)anthranilate isomerase (211 aa).

Belongs to the TrpF family.

It catalyses the reaction N-(5-phospho-beta-D-ribosyl)anthranilate = 1-(2-carboxyphenylamino)-1-deoxy-D-ribulose 5-phosphate. Its pathway is amino-acid biosynthesis; L-tryptophan biosynthesis; L-tryptophan from chorismate: step 3/5. The protein is N-(5'-phosphoribosyl)anthranilate isomerase of Pseudomonas paraeruginosa (strain DSM 24068 / PA7) (Pseudomonas aeruginosa (strain PA7)).